Consider the following 468-residue polypeptide: Siroheme synthase (468 aa).

Positions 1–202 are precorrin-2 dehydrogenase /sirohydrochlorin ferrochelatase; it reads MDYLPLFARL…EQHDSAEQWM (202 aa). Residues 22-23 and 43-44 contribute to the NAD(+) site; these read DI and PS. A Phosphoserine modification is found at Ser126. The tract at residues 214–468 is uroporphyrinogen-III C-methyltransferase; the sequence is GEIVLVGAGP…SGKEHLINLA (255 aa). S-adenosyl-L-methionine is bound at residue Pro223. Catalysis depends on Asp246, which acts as the Proton acceptor. The active-site Proton donor is the Lys268. Residues 299-301, 329-330, Met381, and Gly410 each bind S-adenosyl-L-methionine; these read GGD and TA.

The protein in the N-terminal section; belongs to the precorrin-2 dehydrogenase / sirohydrochlorin ferrochelatase family. In the C-terminal section; belongs to the precorrin methyltransferase family.

The catalysed reaction is uroporphyrinogen III + 2 S-adenosyl-L-methionine = precorrin-2 + 2 S-adenosyl-L-homocysteine + H(+). It carries out the reaction precorrin-2 + NAD(+) = sirohydrochlorin + NADH + 2 H(+). The enzyme catalyses siroheme + 2 H(+) = sirohydrochlorin + Fe(2+). Its pathway is cofactor biosynthesis; adenosylcobalamin biosynthesis; precorrin-2 from uroporphyrinogen III: step 1/1. It participates in cofactor biosynthesis; adenosylcobalamin biosynthesis; sirohydrochlorin from precorrin-2: step 1/1. It functions in the pathway porphyrin-containing compound metabolism; siroheme biosynthesis; precorrin-2 from uroporphyrinogen III: step 1/1. The protein operates within porphyrin-containing compound metabolism; siroheme biosynthesis; siroheme from sirohydrochlorin: step 1/1. Its pathway is porphyrin-containing compound metabolism; siroheme biosynthesis; sirohydrochlorin from precorrin-2: step 1/1. Multifunctional enzyme that catalyzes the SAM-dependent methylations of uroporphyrinogen III at position C-2 and C-7 to form precorrin-2 via precorrin-1. Then it catalyzes the NAD-dependent ring dehydrogenation of precorrin-2 to yield sirohydrochlorin. Finally, it catalyzes the ferrochelation of sirohydrochlorin to yield siroheme. The polypeptide is Siroheme synthase (Tolumonas auensis (strain DSM 9187 / NBRC 110442 / TA 4)).